Consider the following 268-residue polypeptide: Very-long-chain aldehyde decarbonylase GL1-8 (268 aa).

The next 4 helical transmembrane spans lie at 26–46 (IGTF…SLLF), 70–90 (CVVR…ILSY), 107–127 (WTVV…IFYW), and 164–184 (ILFL…HLFT). The Fatty acid hydroxylase domain maps to 114 to 249 (VLFFFVLEDF…FIYMDWLFGT (136 aa)).

Belongs to the sterol desaturase family. Homodimer.

Its subcellular location is the endoplasmic reticulum membrane. The catalysed reaction is a long-chain fatty aldehyde + 2 NADPH + O2 + H(+) = a long-chain alkane + formate + 2 NADP(+) + H2O. Functionally, aldehyde decarbonylase involved in the conversion of aldehydes to alkanes. Core component of a very-long-chain alkane synthesis complex. This chain is Very-long-chain aldehyde decarbonylase GL1-8, found in Oryza sativa subsp. indica (Rice).